A 432-amino-acid polypeptide reads, in one-letter code: Anaerobic glycerol-3-phosphate dehydrogenase subunit B (432 aa).

The protein belongs to the anaerobic G-3-P dehydrogenase subunit B family. In terms of assembly, composed of a catalytic GlpA/B dimer and of membrane bound GlpC. It depends on FMN as a cofactor.

The enzyme catalyses a quinone + sn-glycerol 3-phosphate = dihydroxyacetone phosphate + a quinol. The protein operates within polyol metabolism; glycerol degradation via glycerol kinase pathway; glycerone phosphate from sn-glycerol 3-phosphate (anaerobic route): step 1/1. Functionally, conversion of glycerol 3-phosphate to dihydroxyacetone. Uses fumarate or nitrate as electron acceptor. The protein is Anaerobic glycerol-3-phosphate dehydrogenase subunit B of Haemophilus influenzae (strain 86-028NP).